Here is a 479-residue protein sequence, read N- to C-terminus: Glutathione gamma-glutamylcysteinyltransferase 3 (479 aa).

The region spanning 1 to 221 (MASAGLYRRV…GYMIISKLKR (221 aa)) is the Peptidase C83 domain. Active-site residues include Cys56, His162, and Asp180.

The protein belongs to the phytochelatin synthase family. As to expression, expressed in roots, nodules and leaves.

The enzyme catalyses [Glu(-Cys)](n)-Gly + glutathione + H(+) = [Glu(-Cys)](n+1)-Gly + glycine. Its activity is regulated as follows. Requires cadmium for activity. Functionally, involved in the synthesis of phytochelatins (PC) and homophytochelatins (hPC), the heavy-metal-binding peptides of plants. The protein is Glutathione gamma-glutamylcysteinyltransferase 3 (PCS3) of Lotus japonicus (Lotus corniculatus var. japonicus).